The primary structure comprises 463 residues: RuvB-like 2 (463 aa).

77–84 (GQPGTGKT) serves as a coordination point for ATP.

It belongs to the RuvB family. As to quaternary structure, forms homohexameric rings. Can form a dodecamer with ruvbl1 made of two stacked hexameric rings. Component of the chromatin-remodeling Ino80 complex. Component of some MLL1/MLL complex.

Its subcellular location is the nucleus. The protein localises to the dynein axonemal particle. The enzyme catalyses ATP + H2O = ADP + phosphate + H(+). Its function is as follows. Has double-stranded DNA-stimulated ATPase activity. Has ATP-dependent DNA helicase (5' to 3') activity suggesting a role in nuclear processes such as recombination and transcription. Represses gene activation mediated by beta-catenin. Proposed core component of the chromatin remodeling Ino80 complex which exhibits DNA- and nucleosome-activated ATPase activity and catalyzes ATP-dependent nucleosome sliding. Involved in the endoplasmic reticulum (ER)-associated degradation (ERAD) pathway where it negatively regulates expression of ER stress response genes. May act as a regulator of embryonic heart growth. The sequence is that of RuvB-like 2 (ruvbl2) from Danio rerio (Zebrafish).